We begin with the raw amino-acid sequence, 329 residues long: MNKKTIAMLGAGSWGTAVAIHLAKIGHKTLLWSHNPQHVALMAEQHSNPAYLPGIPFPENLIPSDDLIECVQSADYVIIAVPSHAFAEITNKIPKPTQGLAWLTKGVDPASHQLLSQLVASRFGVDFPIAVISGPSFAKEVARFLPTALTLASNNTNYQKKMHQLFHHDNIRVYLSDDLIGVQLCGAVKNILAIACGISDGLGYGANAKAALITRGLAEMTRLGLSMGARQDTFLGLAGVGDLVLTCTDDQSRNRRFGLLLGREVPIPEAEHQIGQVVEGKHNAAQICAIANKNKVEMPICEQINALLHGIVHAQEAVNNLMSRPAKEE.

4 residues coordinate NADPH: Ser-13, Trp-14, His-34, and Lys-105. 3 residues coordinate sn-glycerol 3-phosphate: Lys-105, Gly-134, and Ser-136. Ala-138 serves as a coordination point for NADPH. Sn-glycerol 3-phosphate is bound by residues Lys-189, Asp-242, Ser-252, Arg-253, and Asn-254. Lys-189 acts as the Proton acceptor in catalysis. Arg-253 is a binding site for NADPH. Residues Val-277 and Glu-279 each coordinate NADPH.

It belongs to the NAD-dependent glycerol-3-phosphate dehydrogenase family.

It is found in the cytoplasm. It carries out the reaction sn-glycerol 3-phosphate + NAD(+) = dihydroxyacetone phosphate + NADH + H(+). It catalyses the reaction sn-glycerol 3-phosphate + NADP(+) = dihydroxyacetone phosphate + NADPH + H(+). The protein operates within membrane lipid metabolism; glycerophospholipid metabolism. In terms of biological role, catalyzes the reduction of the glycolytic intermediate dihydroxyacetone phosphate (DHAP) to sn-glycerol 3-phosphate (G3P), the key precursor for phospholipid synthesis. In Legionella pneumophila (strain Corby), this protein is Glycerol-3-phosphate dehydrogenase [NAD(P)+].